A 377-amino-acid polypeptide reads, in one-letter code: Succinyl-diaminopimelate desuccinylase (377 aa).

His66 is a binding site for Zn(2+). The active site involves Asp68. Asp99 provides a ligand contact to Zn(2+). Glu133 serves as the catalytic Proton acceptor. Zn(2+) contacts are provided by Glu134, Glu162, and His348.

This sequence belongs to the peptidase M20A family. DapE subfamily. As to quaternary structure, homodimer. It depends on Zn(2+) as a cofactor. Co(2+) serves as cofactor.

The enzyme catalyses N-succinyl-(2S,6S)-2,6-diaminopimelate + H2O = (2S,6S)-2,6-diaminopimelate + succinate. The protein operates within amino-acid biosynthesis; L-lysine biosynthesis via DAP pathway; LL-2,6-diaminopimelate from (S)-tetrahydrodipicolinate (succinylase route): step 3/3. Its function is as follows. Catalyzes the hydrolysis of N-succinyl-L,L-diaminopimelic acid (SDAP), forming succinate and LL-2,6-diaminopimelate (DAP), an intermediate involved in the bacterial biosynthesis of lysine and meso-diaminopimelic acid, an essential component of bacterial cell walls. This is Succinyl-diaminopimelate desuccinylase from Bordetella avium (strain 197N).